The chain runs to 132 residues: MAKAAGKQKNVRKKAKRVVVDAVAHVHASFNNTIVTITDGQGNTLSWATAGGSGFRGSRKSTPFAAQIAAERAGEVAKEYGVQNLDVNIKGPGPGRESAIRALNSAGFNIHSITDVTPIPHNGCRPPKKRRV.

The protein belongs to the universal ribosomal protein uS11 family. As to quaternary structure, part of the 30S ribosomal subunit. Interacts with proteins S7 and S18. Binds to IF-3.

In terms of biological role, located on the platform of the 30S subunit, it bridges several disparate RNA helices of the 16S rRNA. Forms part of the Shine-Dalgarno cleft in the 70S ribosome. The sequence is that of Small ribosomal subunit protein uS11 from Dichelobacter nodosus (strain VCS1703A).